The primary structure comprises 379 residues: Homoserine O-succinyltransferase (379 aa).

The AB hydrolase-1 domain maps to 48–357 (NAVLICHALS…SAHGHDAFLM (310 aa)). Ser-154 acts as the Nucleophile in catalysis. Arg-224 lines the substrate pocket. Residues Asp-319 and His-352 contribute to the active site. Residue Asp-353 coordinates substrate.

The protein belongs to the AB hydrolase superfamily. MetX family. In terms of assembly, homodimer.

It localises to the cytoplasm. The catalysed reaction is L-homoserine + succinyl-CoA = O-succinyl-L-homoserine + CoA. It participates in amino-acid biosynthesis; L-methionine biosynthesis via de novo pathway; O-succinyl-L-homoserine from L-homoserine: step 1/1. With respect to regulation, activity increases in the presence of MetW. Its function is as follows. Transfers a succinyl group from succinyl-CoA to L-homoserine, forming succinyl-L-homoserine. The protein is Homoserine O-succinyltransferase of Neisseria gonorrhoeae.